The sequence spans 412 residues: Sterol-4-alpha-carboxylate 3-dehydrogenase erg26, decarboxylating (412 aa).

Residues 17 to 23 (GGCGFLG), 89 to 90 (DI), and 111 to 113 (TAT) each bind NADP(+). 2 residues coordinate substrate: Ser-158 and Tyr-188. Residues Tyr-188, Lys-192, and 217-220 (PAGI) each bind NADP(+). Lys-192 serves as the catalytic Proton donor.

It belongs to the 3-beta-HSD family. As to quaternary structure, heterotetramer of erg25, erg26, erg27 and erg28. Erg28 acts as a scaffold to tether erg27 and other 4,4-demethylation-related enzymes, forming a demethylation enzyme complex, in the endoplasmic reticulum.

Its subcellular location is the endoplasmic reticulum membrane. Its pathway is steroid metabolism; ergosterol biosynthesis. Its function is as follows. Sterol-C4-methyl oxidase; part of the third module of ergosterol biosynthesis pathway that includes the late steps of the pathway. Erg26 is a catalytic component of the C-4 demethylation complex that catalyzes the conversion of 4,4-dimethylfecosterol into fecosterol via 4-methylfecosterol. The third module or late pathway involves the ergosterol synthesis itself through consecutive reactions that mainly occur in the endoplasmic reticulum (ER) membrane. Firstly, the squalene synthase erg9 catalyzes the condensation of 2 farnesyl pyrophosphate moieties to form squalene, which is the precursor of all steroids. Squalene synthase is crucial for balancing the incorporation of farnesyl diphosphate (FPP) into sterol and nonsterol isoprene synthesis. Secondly, squalene is converted into lanosterol by the consecutive action of the squalene epoxidase erg1 and the lanosterol synthase erg7. Then, the delta(24)-sterol C-methyltransferase erg6 methylates lanosterol at C-24 to produce eburicol. Eburicol is the substrate of the sterol 14-alpha demethylase encoded by cyp51A and cyp51B, to yield 4,4,24-trimethyl ergosta-8,14,24(28)-trienol. The C-14 reductase erg24 then reduces the C14=C15 double bond which leads to 4,4-dimethylfecosterol. A sequence of further demethylations at C-4, involving the C-4 demethylation complex containing the C-4 methylsterol oxidases erg25A or erg25B, the sterol-4-alpha-carboxylate 3-dehydrogenase erg26 and the 3-keto-steroid reductase erg27, leads to the production of fecosterol via 4-methylfecosterol. The C-8 sterol isomerase erg2 then catalyzes the reaction which results in unsaturation at C-7 in the B ring of sterols and thus converts fecosterol to episterol. The sterol-C5-desaturase erg3B then catalyzes the introduction of a C-5 double bond in the B ring to produce 5-dehydroepisterol. The 2 other sterol-C5-desaturases, erg3A and erg3C, seem to be less important in ergosterol biosynthesis. The C-22 sterol desaturase erg5 further converts 5-dehydroepisterol into ergosta-5,7,22,24(28)-tetraen-3beta-ol by forming the C-22(23) double bond in the sterol side chain. Finally, ergosta-5,7,22,24(28)-tetraen-3beta-ol is substrate of the C-24(28) sterol reductases erg4A and erg4B to produce ergosterol. Possible alternative sterol biosynthetic pathways might exist from fecosterol to ergosterol, depending on the activities of the erg3 isoforms. The sequence is that of Sterol-4-alpha-carboxylate 3-dehydrogenase erg26, decarboxylating from Aspergillus fumigatus (strain ATCC MYA-4609 / CBS 101355 / FGSC A1100 / Af293) (Neosartorya fumigata).